Reading from the N-terminus, the 400-residue chain is NADH-quinone oxidoreductase subunit D (400 aa).

It belongs to the complex I 49 kDa subunit family. In terms of assembly, NDH-1 is composed of 14 different subunits. Subunits NuoB, C, D, E, F, and G constitute the peripheral sector of the complex.

The protein resides in the cell inner membrane. It catalyses the reaction a quinone + NADH + 5 H(+)(in) = a quinol + NAD(+) + 4 H(+)(out). Functionally, NDH-1 shuttles electrons from NADH, via FMN and iron-sulfur (Fe-S) centers, to quinones in the respiratory chain. The immediate electron acceptor for the enzyme in this species is believed to be a menaquinone. Couples the redox reaction to proton translocation (for every two electrons transferred, four hydrogen ions are translocated across the cytoplasmic membrane), and thus conserves the redox energy in a proton gradient. The polypeptide is NADH-quinone oxidoreductase subunit D (Pelodictyon phaeoclathratiforme (strain DSM 5477 / BU-1)).